A 289-amino-acid polypeptide reads, in one-letter code: Rhodopsin (289 aa).

Residues 1 to 7 (YLVSPAG) are Extracellular-facing. Residues 8-32 (YAALGAYMFLLILVGFPVNFLTLYV) traverse the membrane as a helical segment. At 33–44 (TLEHKKLRTPLN) the chain is on the cytoplasmic side. The helical transmembrane segment at 45 to 67 (YILLNLAVADLFMVLGGFTTTMY) threads the bilayer. The Extracellular segment spans residues 68 to 81 (TSMHGYFVLGRLGC). Cysteines 81 and 158 form a disulfide. A helical transmembrane segment spans residues 82-104 (NLEGFFVTLGGEIALWSLVVLAI). The short motif at 105 to 107 (ERW) is the 'Ionic lock' involved in activated form stabilization element. Topologically, residues 105-123 (ERWIGVFKSIRNFRFTEDH) are cytoplasmic. A helical membrane pass occupies residues 124 to 144 (AIMGLGFSWVMAATCAVPPLV). The Extracellular portion of the chain corresponds to 145-173 (GWLRYIPEGMQCSCGVDYYTRAEGFNNES). An N-linked (GlcNAc...) asparagine glycan is attached at Asn171. The helical transmembrane segment at 174-195 (FVIYMFIVHFLIPLIVIFFCYG) threads the bilayer. Residues 196-223 (RLLCAVKEAAAAQQESETTQRAEKEVSR) lie on the Cytoplasmic side of the membrane. Residues 224–245 (MVVIMVIGYLVCWLPYASVAWW) traverse the membrane as a helical segment. Residues 246-257 (IFCNQGSEFGPI) are Extracellular-facing. Residues 258–279 (FMTLPAFFAKSPAIYNPLIYIC) traverse the membrane as a helical segment. Lys267 is subject to N6-(retinylidene)lysine. The Cytoplasmic segment spans residues 280 to 289 (MNKQFPHCMI).

Belongs to the G-protein coupled receptor 1 family. Opsin subfamily. In terms of processing, phosphorylated on some or all of the serine and threonine residues present in the C-terminal region. Post-translationally, contains one covalently linked retinal chromophore.

Its subcellular location is the membrane. The protein resides in the cell projection. It localises to the cilium. It is found in the photoreceptor outer segment. Its function is as follows. Photoreceptor required for image-forming vision at low light intensity. While most salt water fish species use retinal as chromophore, most freshwater fish use 3-dehydroretinal, or a mixture of retinal and 3-dehydroretinal. Light-induced isomerization of 11-cis to all-trans retinal triggers a conformational change that activates signaling via G-proteins. Subsequent receptor phosphorylation mediates displacement of the bound G-protein alpha subunit by arrestin and terminates signaling. In Leocottus kesslerii (Kessler's sculpin), this protein is Rhodopsin (rho).